The primary structure comprises 118 residues: D-dopachrome decarboxylase (118 aa).

At Pro-2 the chain carries N-acetylproline. At Lys-33 the chain carries N6-acetyllysine.

Belongs to the MIF family. In terms of assembly, homotrimer. Highly expressed in the liver and at lower levels in the heart, lung and pancreas.

Its subcellular location is the cytoplasm. The enzyme catalyses D-dopachrome + H(+) = 5,6-dihydroxyindole + CO2. Tautomerization of D-dopachrome with decarboxylation to give 5,6-dihydroxyindole (DHI). The sequence is that of D-dopachrome decarboxylase (DDT) from Homo sapiens (Human).